Here is a 315-residue protein sequence, read N- to C-terminus: Serine/threonine-protein phosphatase PP2A catalytic subunit 2 (315 aa).

Mn(2+) is bound by residues D62, H64, D90, and N122. H123 (proton donor) is an active-site residue. Positions 172 and 247 each coordinate Mn(2+). A disordered region spans residues 294-315; sequence QFEPAPRENEPHTTRRVPDYFL. Residues 298 to 315 show a composition bias toward basic and acidic residues; the sequence is APRENEPHTTRRVPDYFL. L315 is subject to Leucine methyl ester.

The protein belongs to the PPP phosphatase family. PP-2A subfamily. Mn(2+) is required as a cofactor. Reversibly methyl esterified on Leu-315 by leucine carboxyl methyltransferase 1 (PPM1) and protein phosphatase methylesterase 1 (PPE1). Carboxyl methylation influences the affinity of the catalytic subunit for the different regulatory subunits, thereby modulating the PP2A holoenzyme's substrate specificity, enzyme activity and cellular localization.

It catalyses the reaction O-phospho-L-seryl-[protein] + H2O = L-seryl-[protein] + phosphate. The enzyme catalyses O-phospho-L-threonyl-[protein] + H2O = L-threonyl-[protein] + phosphate. This Paramecium tetraurelia protein is Serine/threonine-protein phosphatase PP2A catalytic subunit 2 (Ppn2).